The primary structure comprises 442 residues: Trigger factor (442 aa).

Residues 176 to 259 (GDFISLSLYV…VNAVIEISSP (84 aa)) enclose the PPIase FKBP-type domain.

The protein belongs to the FKBP-type PPIase family. Tig subfamily.

The protein localises to the cytoplasm. The enzyme catalyses [protein]-peptidylproline (omega=180) = [protein]-peptidylproline (omega=0). Its function is as follows. Involved in protein export. Acts as a chaperone by maintaining the newly synthesized protein in an open conformation. Functions as a peptidyl-prolyl cis-trans isomerase. The chain is Trigger factor from Chlamydia trachomatis serovar L2 (strain ATCC VR-902B / DSM 19102 / 434/Bu).